The chain runs to 727 residues: NADH-ubiquinone oxidoreductase 75 kDa subunit, mitochondrial (727 aa).

A mitochondrion-targeting transit peptide spans 1–23 (MLRIPVRKALVGLSKSSKGCVRT). The 2Fe-2S ferredoxin-type domain maps to 30–108 (NLIEVFVDGQ…GWNILTNSEK (79 aa)). Positions 64, 75, and 78 each coordinate [2Fe-2S] cluster. N6-acetyllysine is present on Lys84. Cys92 serves as a coordination point for [2Fe-2S] cluster. A 4Fe-4S His(Cys)3-ligated-type domain is found at 108–147 (KTKKAREGVMEFLLANHPLDCPICDQGGECDLQDQSMMFG). [4Fe-4S] cluster-binding residues include His124, Cys128, Cys131, Cys137, Cys176, Cys179, Cys182, and Cys226. Residues 245 to 301 (TRKTESIDVMDAVGSNIVVSTRTGEVMRILPRMHEDINEEWISDKTRFAYDGLKRQR) form the 4Fe-4S Mo/W bis-MGD-type domain. Lys499 and Lys709 each carry N6-acetyllysine.

It belongs to the complex I 75 kDa subunit family. As to quaternary structure, core subunit of respiratory chain NADH dehydrogenase (Complex I) which is composed of 45 different subunits. This is the largest subunit of complex I and it is a component of the iron-sulfur (IP) fragment of the enzyme. Complex I associates with ubiquinol-cytochrome reductase complex (Complex III) to form supercomplexes. Interacts with MDM2 and AKAP1. [2Fe-2S] cluster is required as a cofactor. Requires [4Fe-4S] cluster as cofactor.

Its subcellular location is the mitochondrion inner membrane. It carries out the reaction a ubiquinone + NADH + 5 H(+)(in) = a ubiquinol + NAD(+) + 4 H(+)(out). Core subunit of the mitochondrial membrane respiratory chain NADH dehydrogenase (Complex I) which catalyzes electron transfer from NADH through the respiratory chain, using ubiquinone as an electron acceptor. Essential for catalysing the entry and efficient transfer of electrons within complex I. Plays a key role in the assembly and stability of complex I and participates in the association of complex I with ubiquinol-cytochrome reductase complex (Complex III) to form supercomplexes. This chain is NADH-ubiquinone oxidoreductase 75 kDa subunit, mitochondrial (NDUFS1), found in Bos taurus (Bovine).